The chain runs to 205 residues: Small ribosomal subunit protein uS2 (205 aa).

This sequence belongs to the universal ribosomal protein uS2 family.

This is Small ribosomal subunit protein uS2 from Methanoculleus marisnigri (strain ATCC 35101 / DSM 1498 / JR1).